The chain runs to 476 residues: Glycogen synthase (476 aa).

Lys15 provides a ligand contact to ADP-alpha-D-glucose.

This sequence belongs to the glycosyltransferase 1 family. Bacterial/plant glycogen synthase subfamily.

It carries out the reaction [(1-&gt;4)-alpha-D-glucosyl](n) + ADP-alpha-D-glucose = [(1-&gt;4)-alpha-D-glucosyl](n+1) + ADP + H(+). It functions in the pathway glycan biosynthesis; glycogen biosynthesis. Its function is as follows. Synthesizes alpha-1,4-glucan chains using ADP-glucose. The protein is Glycogen synthase (glgA) of Haemophilus influenzae (strain ATCC 51907 / DSM 11121 / KW20 / Rd).